A 361-amino-acid polypeptide reads, in one-letter code: Serine/threonine-protein kinase SRK2I (361 aa).

Positions 22–278 (YDFVKDIGSG…IPEIKTHSWF (257 aa)) constitute a Protein kinase domain. ATP contacts are provided by residues 28 to 36 (IGSGNFGVA) and Lys-51. The active-site Proton acceptor is the Asp-141.

Belongs to the protein kinase superfamily. Ser/Thr protein kinase family. In terms of assembly, interacts with ABI1. Interacts with I-2 and TOPP1. Interacts with FREE1 (via C-terminus). In terms of processing, autophosphorylated in vitro. In terms of tissue distribution, expressed at low levels in seeds, seedlings, roots (especially in tips), stems, leaves, shoots, flowers and siliques.

It carries out the reaction L-seryl-[protein] + ATP = O-phospho-L-seryl-[protein] + ADP + H(+). It catalyses the reaction L-threonyl-[protein] + ATP = O-phospho-L-threonyl-[protein] + ADP + H(+). Its activity is regulated as follows. Activated by autophosphorylation of its activation loop. In terms of biological role, together with SRK2D, key component and activator of the abscisic acid (ABA) signaling pathway that regulates numerous ABA responses, such as seed germination, Pro accumulation, root growth inhibition, dormancy and seedling growth, and, to a lesser extent, stomatal closure. In response to ABA, phosphorylates the ESCRT-I complex component FREE1, which is required for ABA-induced FREE1 nuclear import. The chain is Serine/threonine-protein kinase SRK2I (SRK2I) from Arabidopsis thaliana (Mouse-ear cress).